Consider the following 81-residue polypeptide: Defensin-like protein 311 (81 aa).

The signal sequence occupies residues 1–24; the sequence is MEKISAFFVILFLVSSCLVTMSVG. Intrachain disulfides connect Cys27-Cys50, Cys33-Cys57, and Cys41-Cys59.

This sequence belongs to the DEFL family.

The protein localises to the secreted. The polypeptide is Defensin-like protein 311 (Arabidopsis thaliana (Mouse-ear cress)).